A 489-amino-acid polypeptide reads, in one-letter code: UDP-N-acetylmuramoyl-L-alanyl-D-glutamate--2,6-diaminopimelate ligase (489 aa).

Residue serine 30 participates in UDP-N-acetyl-alpha-D-muramoyl-L-alanyl-D-glutamate binding. 108–114 (GTNGKTT) serves as a coordination point for ATP. UDP-N-acetyl-alpha-D-muramoyl-L-alanyl-D-glutamate is bound by residues asparagine 149, 150–151 (TT), serine 177, glutamine 183, and arginine 185. The residue at position 217 (lysine 217) is an N6-carboxylysine. Residues arginine 383, 407-410 (DNPR), glycine 459, and glutamate 463 contribute to the meso-2,6-diaminopimelate site. Positions 407 to 410 (DNPR) match the Meso-diaminopimelate recognition motif motif.

Belongs to the MurCDEF family. MurE subfamily. Mg(2+) is required as a cofactor. Carboxylation is probably crucial for Mg(2+) binding and, consequently, for the gamma-phosphate positioning of ATP.

It is found in the cytoplasm. It catalyses the reaction UDP-N-acetyl-alpha-D-muramoyl-L-alanyl-D-glutamate + meso-2,6-diaminopimelate + ATP = UDP-N-acetyl-alpha-D-muramoyl-L-alanyl-gamma-D-glutamyl-meso-2,6-diaminopimelate + ADP + phosphate + H(+). The protein operates within cell wall biogenesis; peptidoglycan biosynthesis. Its function is as follows. Catalyzes the addition of meso-diaminopimelic acid to the nucleotide precursor UDP-N-acetylmuramoyl-L-alanyl-D-glutamate (UMAG) in the biosynthesis of bacterial cell-wall peptidoglycan. The chain is UDP-N-acetylmuramoyl-L-alanyl-D-glutamate--2,6-diaminopimelate ligase from Geobacillus kaustophilus (strain HTA426).